We begin with the raw amino-acid sequence, 201 residues long: Small ribosomal subunit protein uS4 (201 aa).

A disordered region spans residues 1-42 (MARYTGPVTRKSRRLGTDLVGGDQSFEKRPYPPGQHGRARIK). The 67-residue stretch at 91-157 (SRLDNVVYRA…VPFQIARETA (67 aa)) folds into the S4 RNA-binding domain.

This sequence belongs to the universal ribosomal protein uS4 family. In terms of assembly, part of the 30S ribosomal subunit. Contacts protein S5. The interaction surface between S4 and S5 is involved in control of translational fidelity.

Functionally, one of the primary rRNA binding proteins, it binds directly to 16S rRNA where it nucleates assembly of the body of the 30S subunit. In terms of biological role, with S5 and S12 plays an important role in translational accuracy. This chain is Small ribosomal subunit protein uS4, found in Mycobacterium ulcerans (strain Agy99).